Reading from the N-terminus, the 177-residue chain is ATP synthase subunit delta 1 (177 aa).

It belongs to the ATPase delta chain family. In terms of assembly, F-type ATPases have 2 components, F(1) - the catalytic core - and F(0) - the membrane proton channel. F(1) has five subunits: alpha(3), beta(3), gamma(1), delta(1), epsilon(1). F(0) has three main subunits: a(1), b(2) and c(10-14). The alpha and beta chains form an alternating ring which encloses part of the gamma chain. F(1) is attached to F(0) by a central stalk formed by the gamma and epsilon chains, while a peripheral stalk is formed by the delta and b chains.

It is found in the cell inner membrane. F(1)F(0) ATP synthase produces ATP from ADP in the presence of a proton or sodium gradient. F-type ATPases consist of two structural domains, F(1) containing the extramembraneous catalytic core and F(0) containing the membrane proton channel, linked together by a central stalk and a peripheral stalk. During catalysis, ATP synthesis in the catalytic domain of F(1) is coupled via a rotary mechanism of the central stalk subunits to proton translocation. Functionally, this protein is part of the stalk that links CF(0) to CF(1). It either transmits conformational changes from CF(0) to CF(1) or is implicated in proton conduction. This chain is ATP synthase subunit delta 1, found in Vibrio atlanticus (strain LGP32) (Vibrio splendidus (strain Mel32)).